Here is a 469-residue protein sequence, read N- to C-terminus: RuvB-like helicase 2 (469 aa).

74–81 (GPPSTGKT) is a binding site for ATP.

Belongs to the RuvB family. As to quaternary structure, may form heterododecamers with RVB1. Component of the SWR1 chromatin remodeling complex, the INO80 chromatin remodeling complex, and of the R2TP complex.

The protein resides in the nucleus. It catalyses the reaction ATP + H2O = ADP + phosphate + H(+). DNA helicase which participates in several chromatin remodeling complexes, including the SWR1 and the INO80 complexes. The SWR1 complex mediates the ATP-dependent exchange of histone H2A for the H2A variant HZT1 leading to transcriptional regulation of selected genes by chromatin remodeling. The INO80 complex remodels chromatin by shifting nucleosomes and is involved in DNA repair. Also involved in pre-rRNA processing. This is RuvB-like helicase 2 (RVB2) from Eremothecium gossypii (strain ATCC 10895 / CBS 109.51 / FGSC 9923 / NRRL Y-1056) (Yeast).